A 101-amino-acid chain; its full sequence is Phosphoribosyl-AMP cyclohydrolase (101 aa).

Asp71 contacts Mg(2+). Zn(2+) is bound at residue Cys72. Mg(2+) is bound by residues Asp73 and Asp75. Cys88 and Cys95 together coordinate Zn(2+).

This sequence belongs to the PRA-CH family. Homodimer. The cofactor is Mg(2+). Requires Zn(2+) as cofactor.

The protein localises to the cytoplasm. It carries out the reaction 1-(5-phospho-beta-D-ribosyl)-5'-AMP + H2O = 1-(5-phospho-beta-D-ribosyl)-5-[(5-phospho-beta-D-ribosylamino)methylideneamino]imidazole-4-carboxamide. It participates in amino-acid biosynthesis; L-histidine biosynthesis; L-histidine from 5-phospho-alpha-D-ribose 1-diphosphate: step 3/9. Catalyzes the hydrolysis of the adenine ring of phosphoribosyl-AMP. The protein is Phosphoribosyl-AMP cyclohydrolase of Bacillus cytotoxicus (strain DSM 22905 / CIP 110041 / 391-98 / NVH 391-98).